Reading from the N-terminus, the 210-residue chain is Molybdenum cofactor guanylyltransferase (210 aa).

GTP is bound by residues 14–16, Lys-27, Asn-55, Asp-73, and Asp-108; that span reads LAG. Residue Asp-108 participates in Mg(2+) binding.

The protein belongs to the MobA family. Monomer. The cofactor is Mg(2+).

It is found in the cytoplasm. The catalysed reaction is Mo-molybdopterin + GTP + H(+) = Mo-molybdopterin guanine dinucleotide + diphosphate. Its function is as follows. Transfers a GMP moiety from GTP to Mo-molybdopterin (Mo-MPT) cofactor (Moco or molybdenum cofactor) to form Mo-molybdopterin guanine dinucleotide (Mo-MGD) cofactor. This Rhodopseudomonas palustris (strain BisB5) protein is Molybdenum cofactor guanylyltransferase.